The sequence spans 200 residues: Adenine phosphoribosyltransferase (200 aa).

The protein belongs to the purine/pyrimidine phosphoribosyltransferase family. As to quaternary structure, homodimer.

It localises to the cytoplasm. It catalyses the reaction AMP + diphosphate = 5-phospho-alpha-D-ribose 1-diphosphate + adenine. The protein operates within purine metabolism; AMP biosynthesis via salvage pathway; AMP from adenine: step 1/1. Functionally, catalyzes a salvage reaction resulting in the formation of AMP, that is energically less costly than de novo synthesis. In Sorangium cellulosum (strain So ce56) (Polyangium cellulosum (strain So ce56)), this protein is Adenine phosphoribosyltransferase.